The primary structure comprises 282 residues: Energy-coupling factor transporter ATP-binding protein EcfA1 (282 aa).

Positions 6-243 constitute an ABC transporter domain; it reads ISFDHVTFTY…VEMLKRIGLD (238 aa). ATP is bound at residue 40–47; sequence GHNGSGKS.

This sequence belongs to the ABC transporter superfamily. Energy-coupling factor EcfA family. As to quaternary structure, forms a stable energy-coupling factor (ECF) transporter complex composed of 2 membrane-embedded substrate-binding proteins (S component), 2 ATP-binding proteins (A component) and 2 transmembrane proteins (T component).

Its subcellular location is the cell membrane. ATP-binding (A) component of a common energy-coupling factor (ECF) ABC-transporter complex. Unlike classic ABC transporters this ECF transporter provides the energy necessary to transport a number of different substrates. This is Energy-coupling factor transporter ATP-binding protein EcfA1 from Lactobacillus delbrueckii subsp. bulgaricus (strain ATCC BAA-365 / Lb-18).